The sequence spans 26 residues: ATP synthase subunit gamma, mitochondrial (26 aa).

The protein belongs to the ATPase gamma chain family. In terms of assembly, F-type ATPases have 2 components, CF(1) - the catalytic core - and CF(0) - the membrane proton channel. CF(1) has five subunits: alpha(3), beta(3), gamma(1), delta(1), epsilon(1). CF(0) has three main subunits: a, b and c.

It localises to the mitochondrion. The protein localises to the mitochondrion inner membrane. In terms of biological role, mitochondrial membrane ATP synthase (F(1)F(0) ATP synthase or Complex V) produces ATP from ADP in the presence of a proton gradient across the membrane which is generated by electron transport complexes of the respiratory chain. F-type ATPases consist of two structural domains, F(1) - containing the extramembraneous catalytic core, and F(0) - containing the membrane proton channel, linked together by a central stalk and a peripheral stalk. During catalysis, ATP synthesis in the catalytic domain of F(1) is coupled via a rotary mechanism of the central stalk subunits to proton translocation. Part of the complex F(1) domain and the central stalk which is part of the complex rotary element. The gamma subunit protrudes into the catalytic domain formed of alpha(3)beta(3). Rotation of the central stalk against the surrounding alpha(3)beta(3) subunits leads to hydrolysis of ATP in three separate catalytic sites on the beta subunits. The protein is ATP synthase subunit gamma, mitochondrial (ATPC) of Spinacia oleracea (Spinach).